Consider the following 469-residue polypeptide: 3-isopropylmalate dehydratase large subunit (469 aa).

Positions 347, 408, and 411 each coordinate [4Fe-4S] cluster.

It belongs to the aconitase/IPM isomerase family. LeuC type 1 subfamily. Heterodimer of LeuC and LeuD. [4Fe-4S] cluster serves as cofactor.

It carries out the reaction (2R,3S)-3-isopropylmalate = (2S)-2-isopropylmalate. The protein operates within amino-acid biosynthesis; L-leucine biosynthesis; L-leucine from 3-methyl-2-oxobutanoate: step 2/4. Functionally, catalyzes the isomerization between 2-isopropylmalate and 3-isopropylmalate, via the formation of 2-isopropylmaleate. This is 3-isopropylmalate dehydratase large subunit from Histophilus somni (strain 129Pt) (Haemophilus somnus).